The following is a 194-amino-acid chain: ATP-dependent Clp protease proteolytic subunit (194 aa).

Catalysis depends on serine 98, which acts as the Nucleophile. The active site involves histidine 123.

It belongs to the peptidase S14 family. In terms of assembly, component of the chloroplastic Clp protease core complex.

It is found in the plastid. Its subcellular location is the cyanelle. It carries out the reaction Hydrolysis of proteins to small peptides in the presence of ATP and magnesium. alpha-casein is the usual test substrate. In the absence of ATP, only oligopeptides shorter than five residues are hydrolyzed (such as succinyl-Leu-Tyr-|-NHMec, and Leu-Tyr-Leu-|-Tyr-Trp, in which cleavage of the -Tyr-|-Leu- and -Tyr-|-Trp bonds also occurs).. Its function is as follows. Cleaves peptides in various proteins in a process that requires ATP hydrolysis. Has a chymotrypsin-like activity. Plays a major role in the degradation of misfolded proteins. The chain is ATP-dependent Clp protease proteolytic subunit (clpP-A) from Cyanophora paradoxa.